Reading from the N-terminus, the 871-residue chain is Alanine--tRNA ligase (871 aa).

The Zn(2+) site is built by histidine 563, histidine 567, cysteine 665, and histidine 669.

The protein belongs to the class-II aminoacyl-tRNA synthetase family. It depends on Zn(2+) as a cofactor.

The protein resides in the cytoplasm. The catalysed reaction is tRNA(Ala) + L-alanine + ATP = L-alanyl-tRNA(Ala) + AMP + diphosphate. Catalyzes the attachment of alanine to tRNA(Ala) in a two-step reaction: alanine is first activated by ATP to form Ala-AMP and then transferred to the acceptor end of tRNA(Ala). Also edits incorrectly charged Ser-tRNA(Ala) and Gly-tRNA(Ala) via its editing domain. This is Alanine--tRNA ligase from Christiangramia forsetii (strain DSM 17595 / CGMCC 1.15422 / KT0803) (Gramella forsetii).